The primary structure comprises 202 residues: Sterile alpha motif domain-containing protein 10 (202 aa).

Residues 118–184 enclose the SAM domain; it reads WSQQDVCKWL…LQQVLRLQVR (67 aa).

The chain is Sterile alpha motif domain-containing protein 10 (SAMD10) from Homo sapiens (Human).